The primary structure comprises 313 residues: Ethylene-responsive transcription factor ERN2 (313 aa).

The segment covering 1 to 10 has biased composition (basic and acidic residues); it reads MEIQFDEPKK. The interval 1–29 is disordered; sequence MEIQFDEPKKSLRPKKVNKFKGRNKKSET. A compositionally biased stretch (basic residues) spans 11–24; the sequence is SLRPKKVNKFKGRN. Residues 32–89 constitute a DNA-binding region (AP2/ERF); that stretch reads KFVGVRQRPSGRYVAEIKDTTQNIRMWLGTFETAEEAARAYDEAATLLRGSKTRTNFV. 2 disordered regions span residues 108–143 and 157–204; these read NRKKGTKQQDMNGISSTTSHADTTNDTTSDGSTSST and TSAS…SSST. 2 stretches are compositionally biased toward low complexity: residues 122–143 and 157–193; these read SSTTSHADTTNDTTSDGSTSST and TSASGVTSTSTNISTSASGVASTSTDISTNSSNTNVN.

Belongs to the AP2/ERF transcription factor family. ERF subfamily. In terms of tissue distribution, expressed in roots, root hairs and leaves. Expressed in root epidermis and root hairs.

It is found in the nucleus. In terms of biological role, transcription factor involved in symbiotic nodule signaling in response to rhizobial Nod factors (NFs). Binds to the GCC box (NF-responsive box) of ENOD11 promoter. Acts as a transcriptional activator of NF-responsive box-containing target gene promoters in root hairs. Involved in early stages of root nodule development. Functions redundantly with ERN1. Is essential with ERN1 for the initiation of root hair infection, and nodule organogenesis and development. Required for accurate expression of the NF signaling genes ENOD11 and ENOD12. This is Ethylene-responsive transcription factor ERN2 from Medicago truncatula (Barrel medic).